We begin with the raw amino-acid sequence, 77 residues long: Translation initiation factor IF-1, chloroplastic (77 aa).

The region spanning 1–71 (MKEQKLIHEG…TRGRIIYRLR (71 aa)) is the S1-like domain.

The protein belongs to the IF-1 family. In terms of assembly, component of the 30S ribosomal translation pre-initiation complex which assembles on the 30S ribosome in the order IF-2 and IF-3, IF-1 and N-formylmethionyl-tRNA(fMet); mRNA recruitment can occur at any time during PIC assembly.

It localises to the plastid. The protein resides in the chloroplast. One of the essential components for the initiation of protein synthesis. Stabilizes the binding of IF-2 and IF-3 on the 30S subunit to which N-formylmethionyl-tRNA(fMet) subsequently binds. Helps modulate mRNA selection, yielding the 30S pre-initiation complex (PIC). Upon addition of the 50S ribosomal subunit IF-1, IF-2 and IF-3 are released leaving the mature 70S translation initiation complex. This Cabomba caroliniana (Carolina fanwort) protein is Translation initiation factor IF-1, chloroplastic.